Here is a 281-residue protein sequence, read N- to C-terminus: Large ribosomal subunit protein uL2 (281 aa).

The disordered stretch occupies residues 224-281 (RGSAMNPNDHPHGGGEGHQPIGRKSPMTPWGKKALGVKTRKTKKASNQFIIRRRKESK).

This sequence belongs to the universal ribosomal protein uL2 family. In terms of assembly, part of the 50S ribosomal subunit. Forms a bridge to the 30S subunit in the 70S ribosome.

Its function is as follows. One of the primary rRNA binding proteins. Required for association of the 30S and 50S subunits to form the 70S ribosome, for tRNA binding and peptide bond formation. It has been suggested to have peptidyltransferase activity; this is somewhat controversial. Makes several contacts with the 16S rRNA in the 70S ribosome. The chain is Large ribosomal subunit protein uL2 from Metamycoplasma arthritidis (strain 158L3-1) (Mycoplasma arthritidis).